The following is a 479-amino-acid chain: Aspartyl/glutamyl-tRNA(Asn/Gln) amidotransferase subunit B (479 aa).

It belongs to the GatB/GatE family. GatB subfamily. Heterotrimer of A, B and C subunits.

The enzyme catalyses L-glutamyl-tRNA(Gln) + L-glutamine + ATP + H2O = L-glutaminyl-tRNA(Gln) + L-glutamate + ADP + phosphate + H(+). The catalysed reaction is L-aspartyl-tRNA(Asn) + L-glutamine + ATP + H2O = L-asparaginyl-tRNA(Asn) + L-glutamate + ADP + phosphate + 2 H(+). Functionally, allows the formation of correctly charged Asn-tRNA(Asn) or Gln-tRNA(Gln) through the transamidation of misacylated Asp-tRNA(Asn) or Glu-tRNA(Gln) in organisms which lack either or both of asparaginyl-tRNA or glutaminyl-tRNA synthetases. The reaction takes place in the presence of glutamine and ATP through an activated phospho-Asp-tRNA(Asn) or phospho-Glu-tRNA(Gln). In Streptococcus pyogenes serotype M1, this protein is Aspartyl/glutamyl-tRNA(Asn/Gln) amidotransferase subunit B.